The chain runs to 575 residues: uncharacterized protein (575 aa).

6 helical membrane-spanning segments follow: residues 16–36 (FFLD…FPLI), 50–70 (WGLI…SSAL), 132–152 (PEDL…MLFI), 154–174 (WQLA…ALYF), 243–263 (ISYM…TWFV), and 264–284 (IRGS…NVLF). An ABC transmembrane type-1 domain is found at 16 to 299 (FFLDFFSAIA…INAIIEMYPR (284 aa)). The 235-residue stretch at 333–567 (IRYKHVSFGY…GGLYSRLHQA (235 aa)) folds into the ABC transporter domain. 366-373 (GPSGAGKS) serves as a coordination point for ATP.

Belongs to the ABC transporter superfamily.

The protein resides in the cell membrane. It is found in the membrane raft. This is an uncharacterized protein from Bacillus subtilis (strain 168).